We begin with the raw amino-acid sequence, 209 residues long: Thymidylate kinase (209 aa).

10-17 provides a ligand contact to ATP; it reads GLDGAGKS.

The protein belongs to the thymidylate kinase family.

The enzyme catalyses dTMP + ATP = dTDP + ADP. In terms of biological role, phosphorylation of dTMP to form dTDP in both de novo and salvage pathways of dTTP synthesis. The sequence is that of Thymidylate kinase from Francisella tularensis subsp. holarctica (strain OSU18).